Here is a 176-residue protein sequence, read N- to C-terminus: Large ribosomal subunit protein uL6 (176 aa).

Residues 151–170 show a composition bias toward basic and acidic residues; the sequence is RPPEPYKGKGVRYADEQVRR. A disordered region spans residues 151 to 176; sequence RPPEPYKGKGVRYADEQVRRKEAKKK.

Belongs to the universal ribosomal protein uL6 family. In terms of assembly, part of the 50S ribosomal subunit.

Its function is as follows. This protein binds to the 23S rRNA, and is important in its secondary structure. It is located near the subunit interface in the base of the L7/L12 stalk, and near the tRNA binding site of the peptidyltransferase center. This chain is Large ribosomal subunit protein uL6, found in Shewanella loihica (strain ATCC BAA-1088 / PV-4).